Reading from the N-terminus, the 351-residue chain is MAEEKQKKSVLEKALKRIEENFGKGSIMILGDETQVQPVEVIPTGSIAIDIATGVGGYPRGRIVEIFGPESSGKTTLALHAIAEAQKMGGVAAFIDAEHALDPVYAKNLGVDLKSLLISQPDHGEQALEIVDELVRSGVVDLIVVDSVAALVPRAEIEGAMGDMQVGLQARLMSQALRKIAGSVNKSKAVVIFTNQIRMKIGVMFGSPETTTGGLALKFYATMRLEVRRGEALKEGKDVIGNVVNVKIVKNKVAPPFKTAQTYIIYGKGIDREYELFHIGVDEGVITRKGSWYYYTTLKGEEVSLGQGGSNVVQFLKENPQIAEEIERRIKEKYGLLRQTEKEPEKADKSS.

Position 68 to 75 (68 to 75 (GPESSGKT)) interacts with ATP.

The protein belongs to the RecA family.

It localises to the cytoplasm. In terms of biological role, can catalyze the hydrolysis of ATP in the presence of single-stranded DNA, the ATP-dependent uptake of single-stranded DNA by duplex DNA, and the ATP-dependent hybridization of homologous single-stranded DNAs. It interacts with LexA causing its activation and leading to its autocatalytic cleavage. The chain is Protein RecA from Thermotoga neapolitana (strain ATCC 49049 / DSM 4359 / NBRC 107923 / NS-E).